A 152-amino-acid polypeptide reads, in one-letter code: Cell division protein SepF (152 aa).

Belongs to the SepF family. Homodimer. Interacts with FtsZ.

It localises to the cytoplasm. Its function is as follows. Cell division protein that is part of the divisome complex and is recruited early to the Z-ring. Probably stimulates Z-ring formation, perhaps through the cross-linking of FtsZ protofilaments. Its function overlaps with FtsA. The protein is Cell division protein SepF of Listeria monocytogenes serotype 4b (strain CLIP80459).